The following is a 120-amino-acid chain: Large ribosomal subunit protein bL12 (120 aa).

It belongs to the bacterial ribosomal protein bL12 family. As to quaternary structure, homodimer. Part of the ribosomal stalk of the 50S ribosomal subunit. Forms a multimeric L10(L12)X complex, where L10 forms an elongated spine to which 2 to 4 L12 dimers bind in a sequential fashion. Binds GTP-bound translation factors.

In terms of biological role, forms part of the ribosomal stalk which helps the ribosome interact with GTP-bound translation factors. Is thus essential for accurate translation. This chain is Large ribosomal subunit protein bL12, found in Haemophilus ducreyi (strain 35000HP / ATCC 700724).